Consider the following 151-residue polypeptide: Urease accessory protein UreE (151 aa).

This sequence belongs to the UreE family.

The protein resides in the cytoplasm. Involved in urease metallocenter assembly. Binds nickel. Probably functions as a nickel donor during metallocenter assembly. This chain is Urease accessory protein UreE, found in Lachnoclostridium phytofermentans (strain ATCC 700394 / DSM 18823 / ISDg) (Clostridium phytofermentans).